A 202-amino-acid polypeptide reads, in one-letter code: dITP/XTP pyrophosphatase (202 aa).

Residue 7-12 (SNNPGK) coordinates substrate. Mg(2+) contacts are provided by glutamate 39 and aspartate 68. The active-site Proton acceptor is aspartate 68. Substrate contacts are provided by residues alanine 69, 157-160 (FGFD), lysine 180, and 185-186 (HR).

The protein belongs to the HAM1 NTPase family. In terms of assembly, homodimer. Mg(2+) is required as a cofactor.

It carries out the reaction XTP + H2O = XMP + diphosphate + H(+). The enzyme catalyses dITP + H2O = dIMP + diphosphate + H(+). It catalyses the reaction ITP + H2O = IMP + diphosphate + H(+). Functionally, pyrophosphatase that catalyzes the hydrolysis of nucleoside triphosphates to their monophosphate derivatives, with a high preference for the non-canonical purine nucleotides XTP (xanthosine triphosphate), dITP (deoxyinosine triphosphate) and ITP. Seems to function as a house-cleaning enzyme that removes non-canonical purine nucleotides from the nucleotide pool, thus preventing their incorporation into DNA/RNA and avoiding chromosomal lesions. In Polaromonas naphthalenivorans (strain CJ2), this protein is dITP/XTP pyrophosphatase.